A 536-amino-acid chain; its full sequence is 1,4-beta-D-glucan cellobiohydrolase B (536 aa).

Positions 1–21 (MSSFQIYRAALLLSILATANA) are cleaved as a signal peptide. The segment at 22 to 458 (QQVGTYTTET…SNIKFGPIGS (437 aa)) is catalytic. E233 serves as the catalytic Nucleophile. The active-site Proton donor is the E238. N351 and N414 each carry an N-linked (GlcNAc...) asparagine glycan. Residues 459-500 (TYSSGSSSGSGSSSSSSSTTTKATSTTLKTTSTTSSGSSSTS) are ser/Thr-rich linker. A disordered region spans residues 464 to 499 (SSSGSGSSSSSSSTTTKATSTTLKTTSTTSSGSSST). A CBM1 domain is found at 500–536 (SAAQAYGQCGGQGWTGPTTCVSGYTCTYENAYYSQCL). Intrachain disulfides connect C508/C525 and C519/C535.

This sequence belongs to the glycosyl hydrolase 7 (cellulase C) family.

The protein resides in the secreted. It catalyses the reaction Hydrolysis of (1-&gt;4)-beta-D-glucosidic linkages in cellulose and cellotetraose, releasing cellobiose from the non-reducing ends of the chains.. Functionally, the biological conversion of cellulose to glucose generally requires three types of hydrolytic enzymes: (1) Endoglucanases which cut internal beta-1,4-glucosidic bonds; (2) Exocellobiohydrolases that cut the disaccharide cellobiose from the non-reducing end of the cellulose polymer chain; (3) Beta-1,4-glucosidases which hydrolyze the cellobiose and other short cello-oligosaccharides to glucose. In Aspergillus niger, this protein is 1,4-beta-D-glucan cellobiohydrolase B (cbhB).